A 556-amino-acid chain; its full sequence is 2-isopropylmalate synthase (556 aa).

Positions 33–307 constitute a Pyruvate carboxyltransferase domain; that stretch reads PIWCSSDLRD…DPELDFSDID (275 aa). Mg(2+) is bound by residues aspartate 42, histidine 246, histidine 248, and asparagine 282. A regulatory domain region spans residues 439-556; it reads ANTPYALISH…SLSQTQAKAA (118 aa).

This sequence belongs to the alpha-IPM synthase/homocitrate synthase family. LeuA type 2 subfamily. In terms of assembly, homodimer. It depends on Mg(2+) as a cofactor.

It localises to the cytoplasm. It catalyses the reaction 3-methyl-2-oxobutanoate + acetyl-CoA + H2O = (2S)-2-isopropylmalate + CoA + H(+). Its pathway is amino-acid biosynthesis; L-leucine biosynthesis; L-leucine from 3-methyl-2-oxobutanoate: step 1/4. Functionally, catalyzes the condensation of the acetyl group of acetyl-CoA with 3-methyl-2-oxobutanoate (2-ketoisovalerate) to form 3-carboxy-3-hydroxy-4-methylpentanoate (2-isopropylmalate). The sequence is that of 2-isopropylmalate synthase from Pseudomonas savastanoi pv. phaseolicola (strain 1448A / Race 6) (Pseudomonas syringae pv. phaseolicola (strain 1448A / Race 6)).